A 444-amino-acid polypeptide reads, in one-letter code: Phosphoglucosamine mutase (444 aa).

Residue Ser-102 is the Phosphoserine intermediate of the active site. Mg(2+)-binding residues include Ser-102, Asp-241, Asp-243, and Asp-245. Ser-102 is modified (phosphoserine).

This sequence belongs to the phosphohexose mutase family. It depends on Mg(2+) as a cofactor. In terms of processing, activated by phosphorylation.

The enzyme catalyses alpha-D-glucosamine 1-phosphate = D-glucosamine 6-phosphate. Functionally, catalyzes the conversion of glucosamine-6-phosphate to glucosamine-1-phosphate. This Haemophilus ducreyi (strain 35000HP / ATCC 700724) protein is Phosphoglucosamine mutase.